We begin with the raw amino-acid sequence, 924 residues long: Mediator of RNA polymerase II transcription subunit 16 (924 aa).

It belongs to the Mediator complex subunit 16 family. In terms of assembly, component of the Mediator complex.

The protein resides in the nucleus. Component of the Mediator complex, a coactivator involved in the regulated transcription of nearly all RNA polymerase II-dependent genes. Mediator functions as a bridge to convey information from gene-specific regulatory proteins to the basal RNA polymerase II transcription machinery. Mediator is recruited to promoters by direct interactions with regulatory proteins and serves as a scaffold for the assembly of a functional preinitiation complex with RNA polymerase II and the general transcription factors. The chain is Mediator of RNA polymerase II transcription subunit 16 (SIN4) from Yarrowia lipolytica (strain CLIB 122 / E 150) (Yeast).